Here is a 1040-residue protein sequence, read N- to C-terminus: Multidrug resistance protein MdtB (1040 aa).

Helical transmembrane passes span 15–37 (LFILRPVATTLLMAAILLAGIIG), 345–362 (FELMLAIALVVMIIYLFL), 367–389 (ATIIPGVAVPLSLIGTFAVMVFL), 396–418 (LTLMALTIATGFVVDDAIVVIEN), 438–460 (GEIGFTIISLTFSLIAVLIPLLF), 472–494 (FAVTLAVAILISAVVSLTLTPMM), 535–557 (HPWLTLSVAFATLLLSVMLWIVI), 867–889 (VWLIVAAVVAMYIVLGVLYESFI), 909–931 (LIIAGSELDIIAIIGIILLIGIV), 968–990 (ILMTTLAALLGALPLMLSTGVGT), and 1000–1022 (MVGGLLVSQVLTLFTTPVIYLLF).

It belongs to the resistance-nodulation-cell division (RND) (TC 2.A.6) family. MdtB subfamily. As to quaternary structure, part of a tripartite efflux system composed of MdtA, MdtB and MdtC. MdtB forms a heteromultimer with MdtC.

The protein localises to the cell inner membrane. This is Multidrug resistance protein MdtB from Salmonella typhimurium (strain LT2 / SGSC1412 / ATCC 700720).